The primary structure comprises 164 residues: Phosphopantetheine adenylyltransferase (164 aa).

Ser10 contacts substrate. ATP is bound by residues 10 to 11 (SF) and His18. Residues Lys42, Met74, and Arg88 each contribute to the substrate site. ATP contacts are provided by residues 89–91 (GLR), Glu99, and 124–130 (YFFVSAR).

The protein belongs to the bacterial CoaD family. Homohexamer. Mg(2+) is required as a cofactor.

It localises to the cytoplasm. The enzyme catalyses (R)-4'-phosphopantetheine + ATP + H(+) = 3'-dephospho-CoA + diphosphate. It participates in cofactor biosynthesis; coenzyme A biosynthesis; CoA from (R)-pantothenate: step 4/5. Its function is as follows. Reversibly transfers an adenylyl group from ATP to 4'-phosphopantetheine, yielding dephospho-CoA (dPCoA) and pyrophosphate. The sequence is that of Phosphopantetheine adenylyltransferase from Anaeromyxobacter dehalogenans (strain 2CP-1 / ATCC BAA-258).